Here is a 623-residue protein sequence, read N- to C-terminus: Replication protein A 70 kDa DNA-binding subunit (623 aa).

Methionine 1 is subject to N-acetylmethionine. Residues lysine 22 and lysine 88 each participate in a glycyl lysine isopeptide (Lys-Gly) (interchain with G-Cter in ubiquitin) cross-link. Residues 116 to 163 (VPYNEGYGQQQQQQQQQQQQAVPSPASAATPPASKPQPQNGSLGMGST) form a disordered region. Positions 124–154 (QQQQQQQQQQQQAVPSPASAATPPASKPQPQ) are enriched in low complexity. N6-acetyllysine; alternate occurs at positions 172 and 176. Residues lysine 172 and lysine 176 each participate in a glycyl lysine isopeptide (Lys-Gly) (interchain with G-Cter in ubiquitin); alternate cross-link. Phosphothreonine is present on threonine 189. Lysine 192 is covalently cross-linked (Glycyl lysine isopeptide (Lys-Gly) (interchain with G-Cter in ubiquitin)). A Phosphothreonine modification is found at threonine 200. Residues 206–290 (WTICARVTNK…VKNDYEMTFN (85 aa)) constitute a DNA-binding region (OB). Glycyl lysine isopeptide (Lys-Gly) (interchain with G-Cter in ubiquitin) cross-links involve residues lysine 229 and lysine 253. Lysine 268 carries the post-translational modification N6-acetyllysine; alternate. Lysine 268 participates in a covalent cross-link: Glycyl lysine isopeptide (Lys-Gly) (interchain with G-Cter in ubiquitin); alternate. Glycyl lysine isopeptide (Lys-Gly) (interchain with G-Cter in ubiquitin) cross-links involve residues lysine 276 and lysine 340. A Phosphoserine modification is found at serine 393. Lysine 419 participates in a covalent cross-link: Glycyl lysine isopeptide (Lys-Gly) (interchain with G-Cter in ubiquitin). Lysine 458 participates in a covalent cross-link: Glycyl lysine isopeptide (Lys-Gly) (interchain with G-Cter in SUMO). Lysine 467 participates in a covalent cross-link: Glycyl lysine isopeptide (Lys-Gly) (interchain with G-Cter in ubiquitin). The C4-type zinc finger occupies 490 to 512 (CPTQDCNKKVIDQQNGLYRCEKC). Residue lysine 562 forms a Glycyl lysine isopeptide (Lys-Gly) (interchain with G-Cter in ubiquitin) linkage. Lysine 586 participates in a covalent cross-link: Glycyl lysine isopeptide (Lys-Gly) (interchain with G-Cter in SUMO).

The protein belongs to the replication factor A protein 1 family. Component of the canonical replication protein A complex (RPA), a heterotrimer composed of RPA1, RPA2 and RPA3. The DNA-binding activity may reside exclusively on the RPA1 subunit. Interacts with PRPF19; the PRP19-CDC5L complex is recruited to the sites of DNA repair where it ubiquitinates the replication protein A complex (RPA). Interacts with RIPK1. Interacts with the polymerase alpha subunit POLA1/p180; this interaction stabilizes the replicative complex and reduces the misincorporation rate of DNA polymerase alpha by acting as a fidelity clamp. Interacts with RAD51 and SENP6 to regulate DNA repair. Interacts with HELB; this interaction promotes HELB recruitment to chromatin following DNA damage. Interacts with PRIMPOL; leading to recruit PRIMPOL on chromatin and stimulate its DNA primase activity. Interacts with XPA; the interaction is direct and associates XPA with the RPA complex. Interacts with ETAA1; the interaction is direct and promotes ETAA1 recruitment at stalled replication forks. Interacts with RPA1; this interaction associates HROB with the RPA complex. Interacts (when poly-ADP-ribosylated) with HTATSF1. DNA damage-induced 'Lys-63'-linked polyubiquitination by PRPF19 mediates ATRIP recruitment to the RPA complex at sites of DNA damage and activation of ATR. Ubiquitinated by RFWD3 at stalled replication forks in response to DNA damage: ubiquitination by RFWD3 does not lead to degradation by the proteasome and promotes removal of the RPA complex from stalled replication forks, promoting homologous recombination. Post-translationally, sumoylated on lysine residues Lys-458 and Lys-586, with Lys-458 being the major site. Sumoylation promotes recruitment of RAD51 to the DNA damage foci to initiate DNA repair through homologous recombination. Desumoylated by SENP6. In terms of processing, poly-ADP-ribosylated by PARP1; promoting recruitment of HTATSF1.

The protein localises to the nucleus. The protein resides in the PML body. Its function is as follows. As part of the heterotrimeric replication protein A complex (RPA/RP-A), binds and stabilizes single-stranded DNA intermediates, that form during DNA replication or upon DNA stress. It prevents their reannealing and in parallel, recruits and activates different proteins and complexes involved in DNA metabolism. Thereby, it plays an essential role both in DNA replication and the cellular response to DNA damage. In the cellular response to DNA damage, the RPA complex controls DNA repair and DNA damage checkpoint activation. Through recruitment of ATRIP activates the ATR kinase a master regulator of the DNA damage response. It is required for the recruitment of the DNA double-strand break repair factors RAD51 and RAD52 to chromatin in response to DNA damage. Also recruits to sites of DNA damage proteins like XPA and XPG that are involved in nucleotide excision repair and is required for this mechanism of DNA repair. Also plays a role in base excision repair (BER) probably through interaction with UNG. Also recruits SMARCAL1/HARP, which is involved in replication fork restart, to sites of DNA damage. May also play a role in telomere maintenance. In Mus musculus (Mouse), this protein is Replication protein A 70 kDa DNA-binding subunit (Rpa1).